The following is a 147-amino-acid chain: Ponticulin-like protein C5 (147 aa).

The signal sequence occupies residues 1 to 20; it reads MKLNNSLLLLIVAIIASSNA. The GPI-like-anchor amidated asparagine moiety is linked to residue asparagine 118. The N-linked (GlcNAc...) asparagine glycan is linked to asparagine 118. The propeptide at 119–147 is removed in mature form; the sequence is SSESDSSDSTRIGASFALFALALLSMLAL.

This sequence belongs to the ponticulin family. Post-translationally, the GPI-like-anchor contains a phosphoceramide group, rather than a phosphatidyl group.

It is found in the cell membrane. This chain is Ponticulin-like protein C5 (ponC5), found in Dictyostelium discoideum (Social amoeba).